Reading from the N-terminus, the 612-residue chain is Alpha-glycerophosphate oxidase (612 aa).

21 to 49 (DLLIIGGGITGAGVALQAAASGLDTGLIE) serves as a coordination point for FAD. A compositionally biased stretch (basic and acidic residues) spans 399–408 (ETSTSEKELD). The segment at 399 to 418 (ETSTSEKELDPSAVSRGSSF) is disordered.

It belongs to the FAD-dependent glycerol-3-phosphate dehydrogenase family. FAD serves as cofactor.

The protein localises to the cytoplasm. The catalysed reaction is sn-glycerol 3-phosphate + O2 = dihydroxyacetone phosphate + H2O2. This is Alpha-glycerophosphate oxidase (glpO) from Streptococcus pyogenes serotype M1.